The primary structure comprises 237 residues: Riboflavin kinase (237 aa).

The interval 1 to 101 is unknown; that stretch reads MRLKIKAIWV…SRIFSSEPDV (101 aa). The segment at 102–237 is riboflavin kinase; it reads LELEGNVLKG…VKKQGMEGQK (136 aa). 111-116 lines the CDP pocket; it reads GLGEGQ. Positions 140 and 142 each coordinate Mg(2+). Residues T197 and E205 each coordinate FMN. Position 210–213 (210–213) interacts with CDP; the sequence is VKLR.

It belongs to the archaeal riboflavin kinase family. The cofactor is Mg(2+).

The catalysed reaction is riboflavin + CTP = CDP + FMN + H(+). It participates in cofactor biosynthesis; FMN biosynthesis; FMN from riboflavin (CTP route): step 1/1. Catalyzes the CTP-dependent phosphorylation of riboflavin (vitamin B2) to form flavin mononucleotide (FMN). This Methanosarcina acetivorans (strain ATCC 35395 / DSM 2834 / JCM 12185 / C2A) protein is Riboflavin kinase (ribK).